Here is a 219-residue protein sequence, read N- to C-terminus: Proteasome subunit beta type-9 (219 aa).

Residues M1–G20 constitute a propeptide, removed in mature form. T21 (nucleophile) is an active-site residue. K53 and K109 each carry N6-acetyllysine.

The protein belongs to the peptidase T1B family. As to quaternary structure, the 26S proteasome consists of a 20S proteasome core and two 19S regulatory subunits. The 20S proteasome core is composed of 28 subunits that are arranged in four stacked rings, resulting in a barrel-shaped structure. The two end rings are each formed by seven alpha subunits, and the two central rings are each formed by seven beta subunits. The catalytic chamber with the active sites is on the inside of the barrel. Component of the immunoproteasome, where it displaces the equivalent housekeeping subunit PSMB6. Component of the spermatoproteasome, a form of the proteasome specifically found in testis. (Microbial infection) Interacts with HIV-1 TAT protein. Post-translationally, autocleaved. The resulting N-terminal Thr residue of the mature subunit is responsible for the nucleophile proteolytic activity.

The protein localises to the cytoplasm. The protein resides in the nucleus. It carries out the reaction Cleavage of peptide bonds with very broad specificity.. Functionally, the proteasome is a multicatalytic proteinase complex which is characterized by its ability to cleave peptides with Arg, Phe, Tyr, Leu, and Glu adjacent to the leaving group at neutral or slightly basic pH. The proteasome has an ATP-dependent proteolytic activity. This subunit is involved in antigen processing to generate class I binding peptides. Replacement of PSMB6 by PSMB9 increases the capacity of the immunoproteasome to cleave model peptides after hydrophobic and basic residues. This Homo sapiens (Human) protein is Proteasome subunit beta type-9 (PSMB9).